The primary structure comprises 449 residues: Bifunctional protein GlmU (449 aa).

Positions 1-226 (MNNIHAIILA…KFEVLGVNDK (226 aa)) are pyrophosphorylase. UDP-N-acetyl-alpha-D-glucosamine-binding positions include 9-12 (LAAG), Lys-23, Gln-73, 78-79 (GT), 100-102 (YGD), Gly-137, Glu-151, Asn-166, and Asn-224. Asp-102 is a Mg(2+) binding site. Position 224 (Asn-224) interacts with Mg(2+). A linker region spans residues 227 to 247 (VQLAELERLFQKDQAIQFMKQ). The segment at 248–449 (GLGLKDPTRF…QKNLKYRSKK (202 aa)) is N-acetyltransferase. Positions 330 and 348 each coordinate UDP-N-acetyl-alpha-D-glucosamine. The Proton acceptor role is filled by His-360. Positions 363 and 374 each coordinate UDP-N-acetyl-alpha-D-glucosamine. Acetyl-CoA contacts are provided by residues Ala-377, 383 to 384 (NY), Ser-402, Ala-420, and Arg-437.

The protein in the N-terminal section; belongs to the N-acetylglucosamine-1-phosphate uridyltransferase family. It in the C-terminal section; belongs to the transferase hexapeptide repeat family. As to quaternary structure, homotrimer. The cofactor is Mg(2+).

The protein resides in the cytoplasm. It catalyses the reaction alpha-D-glucosamine 1-phosphate + acetyl-CoA = N-acetyl-alpha-D-glucosamine 1-phosphate + CoA + H(+). The enzyme catalyses N-acetyl-alpha-D-glucosamine 1-phosphate + UTP + H(+) = UDP-N-acetyl-alpha-D-glucosamine + diphosphate. Its pathway is nucleotide-sugar biosynthesis; UDP-N-acetyl-alpha-D-glucosamine biosynthesis; N-acetyl-alpha-D-glucosamine 1-phosphate from alpha-D-glucosamine 6-phosphate (route II): step 2/2. It functions in the pathway nucleotide-sugar biosynthesis; UDP-N-acetyl-alpha-D-glucosamine biosynthesis; UDP-N-acetyl-alpha-D-glucosamine from N-acetyl-alpha-D-glucosamine 1-phosphate: step 1/1. It participates in bacterial outer membrane biogenesis; LPS lipid A biosynthesis. In terms of biological role, catalyzes the last two sequential reactions in the de novo biosynthetic pathway for UDP-N-acetylglucosamine (UDP-GlcNAc). The C-terminal domain catalyzes the transfer of acetyl group from acetyl coenzyme A to glucosamine-1-phosphate (GlcN-1-P) to produce N-acetylglucosamine-1-phosphate (GlcNAc-1-P), which is converted into UDP-GlcNAc by the transfer of uridine 5-monophosphate (from uridine 5-triphosphate), a reaction catalyzed by the N-terminal domain. The chain is Bifunctional protein GlmU from Vesicomyosocius okutanii subsp. Calyptogena okutanii (strain HA).